Here is a 342-residue protein sequence, read N- to C-terminus: MTSNFSQPVVQLCYEDVNGSCIETPYSPGSRVILYTAFSFGSLLAVFGNLLVMTSVLHFKQLHSPTNFLIASLACADFLVGVTVMLFSMVRTVESCWYFGAKFCTLHSCCDVAFCYSSVLHLCFICIDRYIVVTDPLVYATKFTVSVSGICISVSWILPLTYSGAVFYTGVNDDGLEELVSALNCVGGCQIIVSQGWVLIDFLLFFIPTLVMIILYSKIFLIAKQQAIKIETTSSKVESSSESYKIRVAKRERKAAKTLGVTVLAFVISWLPYTVDILIDAFMGFLTPAYIYEICCWSAYYNSAMNPLIYALFYPWFRKAIKLILSGDVLKASSSTISLFLE.

At 1 to 31 the chain is on the extracellular side; the sequence is MTSNFSQPVVQLCYEDVNGSCIETPYSPGSR. N4 and N18 each carry an N-linked (GlcNAc...) asparagine glycan. Disulfide bonds link C21–C185 and C104–C189. The helical transmembrane segment at 32–52 threads the bilayer; that stretch reads VILYTAFSFGSLLAVFGNLLV. At 53-67 the chain is on the cytoplasmic side; the sequence is MTSVLHFKQLHSPTN. Residues 68–88 traverse the membrane as a helical segment; it reads FLIASLACADFLVGVTVMLFS. The Extracellular portion of the chain corresponds to 89–111; that stretch reads MVRTVESCWYFGAKFCTLHSCCD. The chain crosses the membrane as a helical span at residues 112–132; sequence VAFCYSSVLHLCFICIDRYIV. Over 133-146 the chain is Cytoplasmic; it reads VTDPLVYATKFTVS. Residues 147–167 form a helical membrane-spanning segment; the sequence is VSGICISVSWILPLTYSGAVF. The Extracellular segment spans residues 168 to 195; it reads YTGVNDDGLEELVSALNCVGGCQIIVSQ. A helical membrane pass occupies residues 196–216; sequence GWVLIDFLLFFIPTLVMIILY. The Cytoplasmic segment spans residues 217-258; the sequence is SKIFLIAKQQAIKIETTSSKVESSSESYKIRVAKRERKAAKT. Residues 259–279 traverse the membrane as a helical segment; that stretch reads LGVTVLAFVISWLPYTVDILI. Position 280 (D280) is a topological domain, extracellular. A helical membrane pass occupies residues 281 to 301; sequence AFMGFLTPAYIYEICCWSAYY. The Cytoplasmic segment spans residues 302–342; sequence NSAMNPLIYALFYPWFRKAIKLILSGDVLKASSSTISLFLE.

The protein belongs to the G-protein coupled receptor 1 family. In terms of tissue distribution, expressed in kidney and amygdala. Not expressed in other tissues or brain regions tested.

It is found in the cell membrane. Olfactory receptor specific for trace amines. Trace amine compounds are enriched in animal body fluids and act on trace amine-associated receptors (TAARs) to elicit both intraspecific and interspecific innate behaviors. Ligand-binding causes a conformation change that triggers signaling via G alpha proteins, possibly G(i)/G(o) G alpha proteins. The chain is Trace amine-associated receptor 8 (TAAR8) from Homo sapiens (Human).